Consider the following 101-residue polypeptide: Ubiquitin-related modifier 1 homolog (101 aa).

Gly101 carries the 1-thioglycine modification. A Glycyl lysine isopeptide (Gly-Lys) (interchain with K-? in acceptor proteins) cross-link involves residue Gly101.

This sequence belongs to the URM1 family. In terms of assembly, interacts with cer. C-terminal thiocarboxylation occurs in 2 steps, it is first acyl-adenylated (-COAMP) via the hesA/moeB/thiF part of the MOCS3 homolog, then thiocarboxylated (-COSH) via the rhodanese domain of the MOCS3 homolog.

The protein resides in the cytoplasm. Its pathway is tRNA modification; 5-methoxycarbonylmethyl-2-thiouridine-tRNA biosynthesis. In terms of biological role, acts as a sulfur carrier required for 2-thiolation of mcm(5)S(2)U at tRNA wobble positions of cytosolic tRNA(Lys), tRNA(Glu) and tRNA(Gln). Serves as sulfur donor in tRNA 2-thiolation reaction by being thiocarboxylated (-COSH) at its C-terminus by MOCS3. The sulfur is then transferred to tRNA to form 2-thiolation of mcm(5)S(2)U. Also acts as a ubiquitin-like protein (UBL) that is covalently conjugated via an isopeptide bond to lysine residues of target proteins such as Prx2/Jafrac1, Ciao1, Eip71CD and GILT1. The thiocarboxylated form serves as substrate for conjugation and oxidative stress specifically induces the formation of UBL-protein conjugates. This chain is Ubiquitin-related modifier 1 homolog, found in Drosophila sechellia (Fruit fly).